Consider the following 474-residue polypeptide: Glutamate--tRNA ligase (474 aa).

A 'HIGH' region motif is present at residues 9 to 19; the sequence is PSPTGYLHVGG. The 'KMSKS' region motif lies at 240–244; the sequence is KLSKR. K243 contacts ATP.

The protein belongs to the class-I aminoacyl-tRNA synthetase family. Glutamate--tRNA ligase type 1 subfamily. As to quaternary structure, monomer.

It is found in the cytoplasm. It carries out the reaction tRNA(Glu) + L-glutamate + ATP = L-glutamyl-tRNA(Glu) + AMP + diphosphate. Its function is as follows. Catalyzes the attachment of glutamate to tRNA(Glu) in a two-step reaction: glutamate is first activated by ATP to form Glu-AMP and then transferred to the acceptor end of tRNA(Glu). In Vibrio parahaemolyticus serotype O3:K6 (strain RIMD 2210633), this protein is Glutamate--tRNA ligase.